Here is a 422-residue protein sequence, read N- to C-terminus: Probable metallocarboxypeptidase A (422 aa).

A signal peptide spans 1-17; sequence MRSVLSLALLAVNVVTA. The propeptide at 18 to 112 is activation peptide; it reads AVVAPFDYSG…FEAYSAGYAP (95 aa). Positions 119-419 constitute a Peptidase M14 domain; the sequence is SYHSYQDHLS…AGTVAMLKAV (301 aa). Zn(2+) contacts are provided by His-179 and Glu-182. Substrate contacts are provided by residues 179-182, Arg-237, and 254-255; these read HARE and NR. A disulfide bond links Cys-248 and Cys-271. Zn(2+) is bound at residue His-309. Residue 310–311 participates in substrate binding; the sequence is SY. The active-site Proton donor/acceptor is Glu-385.

This sequence belongs to the peptidase M14 family. Requires Zn(2+) as cofactor.

It localises to the secreted. Extracellular metalloprotease that contributes to pathogenicity. This chain is Probable metallocarboxypeptidase A (MCPA), found in Trichophyton verrucosum (strain HKI 0517).